We begin with the raw amino-acid sequence, 165 residues long: uncharacterized protein (165 aa).

Residues Leu-76 to Thr-161 form the RCK C-terminal domain.

This is an uncharacterized protein from Bacillus subtilis (strain 168).